Reading from the N-terminus, the 188-residue chain is Ribosome maturation factor RimM (188 aa).

Positions 96–169 constitute a PRC barrel domain; the sequence is DDEFYYADLE…RILIDPMAAG (74 aa).

The protein belongs to the RimM family. As to quaternary structure, binds ribosomal protein uS19.

Its subcellular location is the cytoplasm. In terms of biological role, an accessory protein needed during the final step in the assembly of 30S ribosomal subunit, possibly for assembly of the head region. Essential for efficient processing of 16S rRNA. May be needed both before and after RbfA during the maturation of 16S rRNA. It has affinity for free ribosomal 30S subunits but not for 70S ribosomes. This chain is Ribosome maturation factor RimM, found in Agrobacterium fabrum (strain C58 / ATCC 33970) (Agrobacterium tumefaciens (strain C58)).